A 96-amino-acid chain; its full sequence is UPF0235 protein VV2877 (96 aa).

It belongs to the UPF0235 family.

In Vibrio vulnificus (strain YJ016), this protein is UPF0235 protein VV2877.